Reading from the N-terminus, the 377-residue chain is Anhydro-N-acetylmuramic acid kinase (377 aa).

12-19 (GTSLDGID) lines the ATP pocket.

This sequence belongs to the anhydro-N-acetylmuramic acid kinase family.

It catalyses the reaction 1,6-anhydro-N-acetyl-beta-muramate + ATP + H2O = N-acetyl-D-muramate 6-phosphate + ADP + H(+). Its pathway is amino-sugar metabolism; 1,6-anhydro-N-acetylmuramate degradation. It participates in cell wall biogenesis; peptidoglycan recycling. Catalyzes the specific phosphorylation of 1,6-anhydro-N-acetylmuramic acid (anhMurNAc) with the simultaneous cleavage of the 1,6-anhydro ring, generating MurNAc-6-P. Is required for the utilization of anhMurNAc either imported from the medium or derived from its own cell wall murein, and thus plays a role in cell wall recycling. This Methylorubrum extorquens (strain CM4 / NCIMB 13688) (Methylobacterium extorquens) protein is Anhydro-N-acetylmuramic acid kinase.